We begin with the raw amino-acid sequence, 319 residues long: Pantothenate kinase (319 aa).

Gly-101–Ser-108 contributes to the ATP binding site.

Belongs to the prokaryotic pantothenate kinase family.

The protein resides in the cytoplasm. It catalyses the reaction (R)-pantothenate + ATP = (R)-4'-phosphopantothenate + ADP + H(+). The protein operates within cofactor biosynthesis; coenzyme A biosynthesis; CoA from (R)-pantothenate: step 1/5. In Clavibacter sepedonicus (Clavibacter michiganensis subsp. sepedonicus), this protein is Pantothenate kinase.